The chain runs to 410 residues: MESEDYKRYEFKKALEELKDLHGRGTELISLYIPPDKQISDVVQYLREEYSTSSNIKSKSTRKNVLAAIESIMSRLKYYKQPPETGLVFFVGHIATRGDQTEMYTKIIEPPEPIQTFMYKCDSNFHLEQLESQLKEKDIYGLIVIDRKEATVGFLKGTRIEVVDYEQSLVPSKHHQGGQSSRRFERLIEIAANDFFKKIGEIANNAFMPLIKDINAVFIGGPGATKEYFLEKDYLRNEIKQKVKDLFDIGYTDESGLRELVEKASESIKDMKISREKDIINRFLREIKKPEGGLGVYGEDAIINALKSKNLDLLIISDTLKKRRYTYKCPVCNDTKTFTEKPRETPLCDKDNSEMELVDEDDLVEDLYKLADEAGTNVVFVSEDSDEGRLIKTAFGGLAGIMRYVPAIAP.

This sequence belongs to the eukaryotic release factor 1 family. Heterodimer of two subunits, one of which binds GTP.

It is found in the cytoplasm. Its function is as follows. Directs the termination of nascent peptide synthesis (translation) in response to the termination codons UAA, UAG and UGA. The polypeptide is Peptide chain release factor subunit 1 (Picrophilus torridus (strain ATCC 700027 / DSM 9790 / JCM 10055 / NBRC 100828 / KAW 2/3)).